We begin with the raw amino-acid sequence, 362 residues long: Cobalt-precorrin-5B C(1)-methyltransferase (362 aa).

This sequence belongs to the CbiD family.

The enzyme catalyses Co-precorrin-5B + S-adenosyl-L-methionine = Co-precorrin-6A + S-adenosyl-L-homocysteine. The protein operates within cofactor biosynthesis; adenosylcobalamin biosynthesis; cob(II)yrinate a,c-diamide from sirohydrochlorin (anaerobic route): step 6/10. Catalyzes the methylation of C-1 in cobalt-precorrin-5B to form cobalt-precorrin-6A. This is Cobalt-precorrin-5B C(1)-methyltransferase from Methanocaldococcus jannaschii (strain ATCC 43067 / DSM 2661 / JAL-1 / JCM 10045 / NBRC 100440) (Methanococcus jannaschii).